A 240-amino-acid polypeptide reads, in one-letter code: Phosphoribosylaminoimidazole-succinocarboxamide synthase (240 aa).

It belongs to the SAICAR synthetase family.

It catalyses the reaction 5-amino-1-(5-phospho-D-ribosyl)imidazole-4-carboxylate + L-aspartate + ATP = (2S)-2-[5-amino-1-(5-phospho-beta-D-ribosyl)imidazole-4-carboxamido]succinate + ADP + phosphate + 2 H(+). It participates in purine metabolism; IMP biosynthesis via de novo pathway; 5-amino-1-(5-phospho-D-ribosyl)imidazole-4-carboxamide from 5-amino-1-(5-phospho-D-ribosyl)imidazole-4-carboxylate: step 1/2. This Anoxybacillus flavithermus (strain DSM 21510 / WK1) protein is Phosphoribosylaminoimidazole-succinocarboxamide synthase.